Reading from the N-terminus, the 1385-residue chain is Coiled-coil domain-containing protein 7 (1385 aa).

Residues 299 to 330 (LDAEYKQMQCDFQLLSEEKLVLENELQKLKDK) adopt a coiled-coil conformation. Positions 329–364 (DKEKTKPTNNRTKKAVKTVKKKDKGKSEDSEKKMSP) are disordered. The span at 339–352 (RTKKAVKTVKKKDK) shows a compositional bias: basic residues. Positions 353-364 (GKSEDSEKKMSP) are enriched in basic and acidic residues. Residues 374-411 (LDQVQKVARLEIENKVLQEQLKQALQEAEKAKHQLNYF) are a coiled coil. 3 disordered regions span residues 422–545 (GKTE…SKEV), 572–752 (TESK…EPNE), and 809–834 (TKKL…LKHQ). Over residues 425–436 (ETTMQVGNSQTK) the composition is skewed to polar residues. Composition is skewed to basic and acidic residues over residues 437–455 (VKGE…RKSL) and 481–490 (LIEKSSEKKR). Composition is skewed to polar residues over residues 493 to 503 (PAISDLSQILK), 511 to 528 (LESS…YKSP), and 536 to 545 (LTTVSSSKEV). A compositionally biased stretch (basic and acidic residues) spans 573-589 (ESKKADVSEEQLQKMTE). The span at 654–664 (RIQSETKNLKA) shows a compositional bias: polar residues. 2 stretches are compositionally biased toward basic and acidic residues: residues 665–676 (TRNESFHSHNDV) and 685–697 (QDTK…EVKK). Residues 701 to 711 (FQDNQLSTHNE) show a composition bias toward polar residues. Positions 712-726 (VPNERLVVEHQESLS) are enriched in basic and acidic residues.

As to expression, expressed in epithelium of normal cervix and cervical cancer. Overexpressed in early and interim cervical cancer.

In terms of biological role, may play a role in tumorigenesis. This is Coiled-coil domain-containing protein 7 (CCDC7) from Homo sapiens (Human).